Here is an 88-residue protein sequence, read N- to C-terminus: Small ribosomal subunit protein uS15 (88 aa).

The protein belongs to the universal ribosomal protein uS15 family. In terms of assembly, part of the 30S ribosomal subunit. Forms a bridge to the 50S subunit in the 70S ribosome, contacting the 23S rRNA.

Its function is as follows. One of the primary rRNA binding proteins, it binds directly to 16S rRNA where it helps nucleate assembly of the platform of the 30S subunit by binding and bridging several RNA helices of the 16S rRNA. Functionally, forms an intersubunit bridge (bridge B4) with the 23S rRNA of the 50S subunit in the ribosome. The protein is Small ribosomal subunit protein uS15 of Finegoldia magna (strain ATCC 29328 / DSM 20472 / WAL 2508) (Peptostreptococcus magnus).